The primary structure comprises 324 residues: tRNA dimethylallyltransferase (324 aa).

Position 17–24 (17–24 (GPTASGKT)) interacts with ATP. 19–24 (TASGKT) serves as a coordination point for substrate. Interaction with substrate tRNA stretches follow at residues 42-45 (DSAL), 166-170 (QRIQR), and 251-256 (RCVGYR).

It belongs to the IPP transferase family. As to quaternary structure, monomer. The cofactor is Mg(2+).

It carries out the reaction adenosine(37) in tRNA + dimethylallyl diphosphate = N(6)-dimethylallyladenosine(37) in tRNA + diphosphate. Catalyzes the transfer of a dimethylallyl group onto the adenine at position 37 in tRNAs that read codons beginning with uridine, leading to the formation of N6-(dimethylallyl)adenosine (i(6)A). The chain is tRNA dimethylallyltransferase from Burkholderia mallei (strain NCTC 10247).